Here is a 246-residue protein sequence, read N- to C-terminus: Ribonuclease 3 (246 aa).

Residues 18–147 enclose the RNase III domain; the sequence is FQELQKKIGI…FIGALYLDQG (130 aa). A Mg(2+)-binding site is contributed by Glu-60. The active site involves Asp-64. 2 residues coordinate Mg(2+): Asp-133 and Glu-136. The active site involves Glu-136. The DRBM domain maps to 173-242; the sequence is DFKSQLQELV…AQMALETLRA (70 aa).

The protein belongs to the ribonuclease III family. As to quaternary structure, homodimer. Requires Mg(2+) as cofactor.

It localises to the cytoplasm. It carries out the reaction Endonucleolytic cleavage to 5'-phosphomonoester.. In terms of biological role, digests double-stranded RNA. Involved in the processing of primary rRNA transcript to yield the immediate precursors to the large and small rRNAs (23S and 16S). Processes some mRNAs, and tRNAs when they are encoded in the rRNA operon. Processes pre-crRNA and tracrRNA of type II CRISPR loci if present in the organism. The chain is Ribonuclease 3 from Geobacillus thermodenitrificans (strain NG80-2).